The primary structure comprises 879 residues: DNA methyltransferase A (879 aa).

The protein belongs to the methyltransferase superfamily.

It carries out the reaction a 2'-deoxyadenosine in DNA + S-adenosyl-L-methionine = an N(6)-methyl-2'-deoxyadenosine in DNA + S-adenosyl-L-homocysteine + H(+). Functionally, recognizes the double-stranded sequence 5'-GACGAG-3' and methylates A-5, yielding m6A. m6A methylation functions as a transcriptional modifier, promoting transcription of a number of genes (at least scpA, hbs, rnhC, yumC and zapA). One studied mechanism is via transcriptional repressor ScoC (also called hpr) which binds to non-methylated scpA promoter; when the m6A target is methylated ScoC no longer binds and scpA transcription is up-regulated. Other mechanisms for gene expression regulation probably exist. Binds DNA with and without the target sequence. Although it resembles a restriction-modification system, it does not have detectable endonuclease activity under tested conditions. A gamma subtype methylase. The protein is DNA methyltransferase A of Bacillus subtilis (strain 168).